A 340-amino-acid polypeptide reads, in one-letter code: Insulin gene enhancer protein ISL-2B (340 aa).

LIM zinc-binding domains are found at residues 9-62 (CVGC…CKRD) and 71-125 (CAKC…RADH). The homeobox DNA-binding region spans 172-231 (TTRVRTVLNEKQLHTLRTCYNANPRPDALMKEQLVEMTGLSPRVIRVWFQNKRCKDKKRT). Positions 307-317 (ESGSMGNSSGS) are enriched in low complexity. The interval 307–340 (ESGSMGNSSGSDVTSLSSQLPDTPNSMVPSPMDT) is disordered. The segment covering 318 to 340 (DVTSLSSQLPDTPNSMVPSPMDT) has biased composition (polar residues).

The protein localises to the nucleus. Binds to one of the cis-acting domain of the insulin gene enhancer. May be involved in subtype specialization of primary motoneurons. The polypeptide is Insulin gene enhancer protein ISL-2B (isl2b) (Oncorhynchus tshawytscha (Chinook salmon)).